Here is a 160-residue protein sequence, read N- to C-terminus: Cytochrome b6-f complex subunit 4 (160 aa).

The next 3 membrane-spanning stretches (helical) occupy residues 36–56 (LLYV…GLAV), 95–115 (LLGI…PFIE), and 131–151 (AVFL…TFPI).

This sequence belongs to the cytochrome b family. PetD subfamily. In terms of assembly, the 4 large subunits of the cytochrome b6-f complex are cytochrome b6, subunit IV (17 kDa polypeptide, PetD), cytochrome f and the Rieske protein, while the 4 small subunits are PetG, PetL, PetM and PetN. The complex functions as a dimer.

It localises to the cellular thylakoid membrane. Component of the cytochrome b6-f complex, which mediates electron transfer between photosystem II (PSII) and photosystem I (PSI), cyclic electron flow around PSI, and state transitions. This is Cytochrome b6-f complex subunit 4 from Crocosphaera subtropica (strain ATCC 51142 / BH68) (Cyanothece sp. (strain ATCC 51142)).